Here is a 362-residue protein sequence, read N- to C-terminus: Heat-inducible transcription repressor HrcA (362 aa).

Belongs to the HrcA family.

In terms of biological role, negative regulator of class I heat shock genes (grpE-dnaK-dnaJ and groELS operons). Prevents heat-shock induction of these operons. This Rhodopseudomonas palustris (strain BisB18) protein is Heat-inducible transcription repressor HrcA.